Consider the following 605-residue polypeptide: NADH-ubiquinone oxidoreductase chain 5 (605 aa).

Transmembrane regions (helical) follow at residues Thr-8–Thr-28, Ile-34–Phe-54, Met-87–Tyr-107, Phe-117–Leu-137, Leu-140–Gly-160, Ala-171–Phe-191, Thr-241–Ile-261, Ile-273–Leu-293, Ile-301–Gln-321, Leu-324–Gly-344, Leu-366–Leu-386, Leu-409–Phe-429, Leu-457–Ile-477, Met-482–Leu-502, and Ile-584–Phe-604.

The protein belongs to the complex I subunit 5 family. Core subunit of respiratory chain NADH dehydrogenase (Complex I) which is composed of 45 different subunits.

The protein resides in the mitochondrion inner membrane. It catalyses the reaction a ubiquinone + NADH + 5 H(+)(in) = a ubiquinol + NAD(+) + 4 H(+)(out). In terms of biological role, core subunit of the mitochondrial membrane respiratory chain NADH dehydrogenase (Complex I) which catalyzes electron transfer from NADH through the respiratory chain, using ubiquinone as an electron acceptor. Essential for the catalytic activity and assembly of complex I. This is NADH-ubiquinone oxidoreductase chain 5 (MT-ND5) from Rousettus amplexicaudatus (Common rousette).